A 563-amino-acid polypeptide reads, in one-letter code: Cytochrome P450 monooxygenase phqL (563 aa).

Transmembrane regions (helical) follow at residues Glu20–Phe40, Ile52–Gly72, and Ala80–Leu100. A glycan (N-linked (GlcNAc...) asparagine) is linked at Asn279. The helical transmembrane segment at Leu362–Leu382 threads the bilayer. Asn419 carries N-linked (GlcNAc...) asparagine glycosylation. Cys502 is a heme binding site.

The protein belongs to the cytochrome P450 family. It depends on heme as a cofactor.

It localises to the membrane. The protein operates within alkaloid biosynthesis. Cytochrome P450 monooxygenase; part of the gene cluster that mediates the biosynthesis of paraherquamide, a fungal indole alkaloid that belongs to a family of natural products containing a characteristic bicyclo[2.2.2]diazaoctane core. The first steps in the biosynthesis of paraherquamide is the production of the beta-methyl-proline precursor from L-isoleucine. They require oxidation of a terminally hydroxylated L-isoleucine to the corresponding aldehyde by enzymes which have still to be identified. Spontaneous cyclization and dehydration would yield the 4-methyl pyrolline-5-carboxylic acid, which is then reduced by the pyrroline-5-carboxylate reductase phqD leading to the beta-methyl-proline precursor. The next step of paraherquamide biosynthesis involves coupling of beta-methyl-proline and L-tryptophan by the bimodular NRPS phqB, to produce a monooxopiperazine intermediate. The reductase (R) domain of phqB utilizes NADPH for hydride transfer to reduce the thioester bond of the T domain-tethered linear dipeptide to a hemithioaminal intermediate, which spontaneously cleaves the C-S bond to release the aldehyde product. This compound undergoes spontaneous cyclization and dehydration to give a dienamine which is reverse prenylated at C-2 by the reverse prenyltransferase phqJ. The other prenyltransferase present in the cluster, phqI may be a redundant gene in the pathway. During biosynthetic assembly, the key step to produce the polycyclic core is catalyzed by the bifunctional reductase and intramolecular [4+2] Diels-Alderase, phqE, resulting in formation of the [2.2.2] diazaoctane intermediate preparaherquamide. Following formation of preparaherquamide, an indole 2,3-epoxidation-initiated pinacol-like rearrangement is catalyzed by the phqK FAD-dependent monooxygenase. The prenyltransferase phqA, the cytochrome P450 monooxygenase phqL, and the FAD-linked oxidoreductase phqH (or the cytochrome P450 monooxygenase phqM), are proposed to be involved in the formation of the pyran ring. The FAD-dependent monooxygenase phqK is likely responsible for generation of the spiro-oxindole, and the N-methylation is likely mediated by the phqN methyltransferase leading to the isolable natural product paraherquamide F. However, the order of these biosynthetic steps has still to be determined. In late-stage paraherquamide biosynthesis, the third P450 monooxygenase, phqO, is probably responsible for the C-14 hydroxylation, transforming paraherquamide F to paraherquamide G, and paraherquamide E to the final product paraherquamide A. The expansion from the 6-membered ring pyran (in paraherquamides F and G) to the 7-membered dioxepin ring (in paraherquamides A and E) represents a poorly understood but intriguing process that probably involves the 2-oxoglutarate-dependent dioxygenase phqC. Finally, the remaining members of the paraherquamide cluster, including phqI as well as phqM (or phqH), do not have a clearly prescribed role and appear to be redundant. The sequence is that of Cytochrome P450 monooxygenase phqL from Penicillium fellutanum.